The chain runs to 150 residues: Large ribosomal subunit protein bL9 (150 aa).

This sequence belongs to the bacterial ribosomal protein bL9 family.

In terms of biological role, binds to the 23S rRNA. This Streptococcus agalactiae serotype III (strain NEM316) protein is Large ribosomal subunit protein bL9.